A 177-amino-acid polypeptide reads, in one-letter code: Large ribosomal subunit protein uL6 (177 aa).

This sequence belongs to the universal ribosomal protein uL6 family. In terms of assembly, part of the 50S ribosomal subunit.

In terms of biological role, this protein binds to the 23S rRNA, and is important in its secondary structure. It is located near the subunit interface in the base of the L7/L12 stalk, and near the tRNA binding site of the peptidyltransferase center. The polypeptide is Large ribosomal subunit protein uL6 (Rhizobium leguminosarum bv. trifolii (strain WSM2304)).